Reading from the N-terminus, the 417-residue chain is Hyaluronidase-3 (417 aa).

Positions 1 to 20 are cleaved as a signal peptide; sequence MTTQLGPALVLGVALCLGCG. 5 disulfides stabilise this stretch: C42–C331, C205–C220, C356–C367, C361–C395, and C397–C406. N69 is a glycosylation site (N-linked (GlcNAc...) asparagine). E129 serves as the catalytic Proton donor. An N-linked (GlcNAc...) asparagine glycan is attached at N215. The EGF-like domain maps to 352-407; that stretch reads AAMACSHQRCHGHGRCARRDPGQMEAFLHLWPDGSLGDWKSFSCHCYWGWAGPTCQ.

This sequence belongs to the glycosyl hydrolase 56 family. In terms of processing, N-glycosylated. As to expression, expressed in sperm. Highly expressed in epidermis of the skin, where it is expressed intracellularily in the deep horny layer (at protein level). Bone marrow, testis and kidney.

The protein localises to the secreted. The protein resides in the cell membrane. It localises to the cytoplasmic vesicle. It is found in the secretory vesicle. Its subcellular location is the acrosome. The protein localises to the endoplasmic reticulum. The protein resides in the early endosome. The enzyme catalyses Random hydrolysis of (1-&gt;4)-linkages between N-acetyl-beta-D-glucosamine and D-glucuronate residues in hyaluronate.. In terms of biological role, facilitates sperm penetration into the layer of cumulus cells surrounding the egg by digesting hyaluronic acid. Involved in induction of the acrosome reaction in the sperm. Involved in follicular atresia, the breakdown of immature ovarian follicles that are not selected to ovulate. Induces ovarian granulosa cell apoptosis, possibly via apoptotic signaling pathway involving CASP8 and CASP3 activation, and poly(ADP-ribose) polymerase (PARP) cleavage. Has no hyaluronidase activity in embryonic fibroblasts in vitro. Has no hyaluronidase activity in granulosa cells in vitro. This chain is Hyaluronidase-3 (HYAL3), found in Homo sapiens (Human).